Here is a 547-residue protein sequence, read N- to C-terminus: Alpha-1,3-mannosyl-glycoprotein 4-beta-N-acetylglucosaminyltransferase B (547 aa).

Topologically, residues 1–7 (MRLRNGT) are cytoplasmic. A helical; Signal-anchor for type II membrane protein transmembrane segment spans residues 8-28 (FLTVLLFGLCGLISLSWYTAF). At 29 to 547 (SNSKGNVVDI…LSEIFIKKAE (519 aa)) the chain is on the lumenal side. Residues 36–83 (VDIYQREFLALRDRLHSAEQENLKRSKELNLVLDEIKRAIAEKQALRD) adopt a coiled-coil conformation. N-linked (GlcNAc...) asparagine glycans are attached at residues asparagine 85, asparagine 101, and asparagine 464.

Belongs to the glycosyltransferase 54 family. A divalent metal cation is required as a cofactor. In terms of processing, N-glycosylated.

It is found in the golgi apparatus membrane. It catalyses the reaction N(4)-{beta-D-GlcNAc-(1-&gt;2)-alpha-D-Man-(1-&gt;3)-[beta-D-GlcNAc-(1-&gt;2)-alpha-D-Man-(1-&gt;6)]-beta-D-Man-(1-&gt;4)-beta-D-GlcNAc-(1-&gt;4)-beta-D-GlcNAc}-L-asparaginyl-[protein] + UDP-N-acetyl-alpha-D-glucosamine = N(4)-{beta-D-GlcNAc-(1-&gt;2)-[beta-D-GlcNAc-(1-&gt;4)]-alpha-D-Man-(1-&gt;3)-[beta-D-GlcNAc-(1-&gt;2)-alpha-D-Man-(1-&gt;6)]-beta-D-Man-(1-&gt;4)-beta-D-GlcNAc-(1-&gt;4)-beta-D-GlcNAc}-L-asparaginyl-[protein] + UDP + H(+). The catalysed reaction is an N(4)-{beta-D-GlcNAc-(1-&gt;2)-alpha-D-Man-(1-&gt;3)-[alpha-D-Man-(1-&gt;6)]-beta-D-Man-(1-&gt;4)-beta-D-GlcNAc-(1-&gt;4)-beta-D-GlcNAc}-L-asparaginyl-[protein] + UDP-N-acetyl-alpha-D-glucosamine = an N(4)-{beta-D-GlcNAc-(1-&gt;2)-[beta-D-GlcNAc-(1-&gt;4)]-alpha-D-Man-(1-&gt;3)-[alpha-D-Man-(1-&gt;6)]-beta-D-Man-(1-&gt;4)-beta-D-GlcNAc-(1-&gt;4)-beta-D-GlcNAc}-L-asparaginyl-[protein] + UDP + H(+). The enzyme catalyses an N(4)-{beta-D-GlcNAc-(1-&gt;2)-alpha-D-Man-(1-&gt;3)-[beta-D-GlcNAc-(1-&gt;2)-[beta-D-GlcNAc-(1-&gt;6)]-alpha-D-Man-(1-&gt;6)]-beta-D-Man-(1-&gt;4)-beta-D-GlcNAc-(1-&gt;4)-beta-D-GlcNAc}-L-asparaginyl-[protein] + UDP-N-acetyl-alpha-D-glucosamine = an N(4)-{beta-D-GlcNAc-(1-&gt;2)-[beta-D-GlcNAc-(1-&gt;4)]-alpha-D-Man-(1-&gt;3)-[beta-D-GlcNAc-(1-&gt;2)-[beta-D-GlcNAc-(1-&gt;6)]-alpha-D-Man-(1-&gt;6)]-beta-D-Man-(1-&gt;4)-beta-D-GlcNAc-(1-&gt;4)-beta-D-GlcNAc}-L-asparaginyl-[protein] + UDP + H(+). It carries out the reaction an N(4)-{beta-D-GlcNAc-(1-&gt;2)-alpha-D-Man-(1-&gt;3)-[beta-D-GlcNAc-(1-&gt;2)-alpha-D-Man-(1-&gt;6)]-beta-D-Man-(1-&gt;4)-beta-D-GlcNAc-(1-&gt;4)-[alpha-L-Fuc-(1-&gt;6)]-beta-D-GlcNAc}-L-asparaginyl-[protein] + UDP-N-acetyl-alpha-D-glucosamine = N(4)-{beta-D-GlcNAc-(1-&gt;2)-[beta-D-GlcNAc-(1-&gt;4)]-alpha-D-Man-(1-&gt;3)-[beta-D-GlcNAc-(1-&gt;2)-alpha-D-Man-(1-&gt;6)]-beta-D-Man-(1-&gt;4)-beta-D-GlcNAc-(1-&gt;4)-[alpha-L-Fuc-(1-&gt;6)]-beta-D-GlcNAc}-asparaginyl-[protein] + UDP + H(+). It catalyses the reaction an N(4)-{beta-D-GlcNAc-(1-&gt;2)-alpha-D-Man-(1-&gt;3)-[beta-D-Gal-(1-&gt;4)-beta-D-GlcNAc-(1-&gt;2)-alpha-D-Man-(1-&gt;6)]-beta-D-Man-(1-&gt;4)-beta-D-GlcNAc-(1-&gt;4)-beta-D-GlcNAc}-L-asparaginyl-[protein] + UDP-N-acetyl-alpha-D-glucosamine = an N(4)-{beta-D-GlcNAc-(1-&gt;2)-[beta-D-GlcNAc-(1-&gt;4)]-alpha-D-Man-(1-&gt;3)-[beta-D-Gal-(1-&gt;4)-beta-D-GlcNAc-(1-&gt;2)-alpha-D-Man-(1-&gt;6)]-beta-D-Man-(1-&gt;4)-beta-D-GlcNAc-(1-&gt;4)-beta-D-GlcNAc}-L-asparaginyl-[protein] + UDP + H(+). The catalysed reaction is N(4)-{beta-D-GlcNAc-(1-&gt;2)-alpha-D-Man-(1-&gt;3)-[alpha-D-Man-(1-&gt;3)-{alpha-D-Man-(1-&gt;6)}-alpha-D-Man-(1-&gt;6)]-beta-D-Man-(1-&gt;4)-beta-D-GlcNAc-(1-&gt;4)-beta-D-GlcNAc}-asparaginyl-[protein] + UDP-N-acetyl-alpha-D-glucosamine = N(4)-{beta-D-GlcNAc-(1-&gt;2)-[beta-D-GlcNAc-(1-&gt;4)]-alpha-D-Man-(1-&gt;3)-[alpha-D-Man-(1-&gt;3)-{alpha-D-Man-(1-&gt;6)}-alpha-D-Man-(1-&gt;6)]-beta-D-Man-(1-&gt;4)-beta-D-GlcNAc-(1-&gt;4)-beta-D-GlcNAc}-asparaginyl-[protein] + UDP + H(+). The enzyme catalyses N(4)-{beta-D-GlcNAc-(1-&gt;2)-alpha-D-Man-(1-&gt;3)-beta-D-Man-(1-&gt;4)-beta-D-GlcNAc-(1-&gt;4)-beta-D-GlcNAc}-asparaginyl-[protein] + UDP-N-acetyl-alpha-D-glucosamine = N(4)-{beta-D-GlcNAc-(1-&gt;2)-[beta-D-GlcNAc-(1-&gt;4)]-alpha-D-Man-(1-&gt;3)-beta-D-Man-(1-&gt;4)-beta-D-GlcNAc-(1-&gt;4)-beta-D-GlcNAc}-asparaginyl-[protein] + UDP + H(+). It functions in the pathway protein modification; protein glycosylation. Functionally, glycosyltransferase that catalyze the transfer of GlcNAc from UDP-GlcNAc to the GlcNAcbeta1-2Manalpha1-3 arm of the core structure of N-linked glycans through a beta1-4 linkage and participates in the production of tri- and tetra-antennary N-linked sugar chains. Prefers complex-type N-glycans over hybrid-types. Has lower affinities for donors or acceptors than MGAT4A, suggesting that, under physiological conditions, it is not the main contributor in N-glycan biosynthesis. The sequence is that of Alpha-1,3-mannosyl-glycoprotein 4-beta-N-acetylglucosaminyltransferase B (mgat4bQ9UQ53) from Danio rerio (Zebrafish).